The primary structure comprises 482 residues: Adenylosuccinate lyase (482 aa).

Residues 14-15 (RY), 82-84 (RHD), and 108-109 (TS) each bind substrate. H156 functions as the Proton donor/acceptor in the catalytic mechanism. Q238 is a substrate binding site. S286 acts as the Proton donor/acceptor in catalysis. Positions 300, 326, 331, and 335 each coordinate substrate.

It belongs to the lyase 1 family. Adenylosuccinate lyase subfamily. As to quaternary structure, homotetramer. Residues from neighboring subunits contribute catalytic and substrate-binding residues to each active site.

The catalysed reaction is N(6)-(1,2-dicarboxyethyl)-AMP = fumarate + AMP. The enzyme catalyses (2S)-2-[5-amino-1-(5-phospho-beta-D-ribosyl)imidazole-4-carboxamido]succinate = 5-amino-1-(5-phospho-beta-D-ribosyl)imidazole-4-carboxamide + fumarate. It functions in the pathway purine metabolism; AMP biosynthesis via de novo pathway; AMP from IMP: step 2/2. The protein operates within purine metabolism; IMP biosynthesis via de novo pathway; 5-amino-1-(5-phospho-D-ribosyl)imidazole-4-carboxamide from 5-amino-1-(5-phospho-D-ribosyl)imidazole-4-carboxylate: step 2/2. The chain is Adenylosuccinate lyase (ade8) from Schizosaccharomyces pombe (strain 972 / ATCC 24843) (Fission yeast).